Consider the following 586-residue polypeptide: Aspartate--tRNA(Asp/Asn) ligase (586 aa).

E176 contributes to the L-aspartate binding site. The segment at 200 to 203 (QIFK) is aspartate. R222 provides a ligand contact to L-aspartate. Residues 222 to 224 (RDE) and Q231 each bind ATP. H449 is a binding site for L-aspartate. E483 serves as a coordination point for ATP. R490 contributes to the L-aspartate binding site. 535 to 538 (GIDR) serves as a coordination point for ATP.

This sequence belongs to the class-II aminoacyl-tRNA synthetase family. Type 1 subfamily. As to quaternary structure, homodimer.

It is found in the cytoplasm. The catalysed reaction is tRNA(Asx) + L-aspartate + ATP = L-aspartyl-tRNA(Asx) + AMP + diphosphate. Functionally, aspartyl-tRNA synthetase with relaxed tRNA specificity since it is able to aspartylate not only its cognate tRNA(Asp) but also tRNA(Asn). Reaction proceeds in two steps: L-aspartate is first activated by ATP to form Asp-AMP and then transferred to the acceptor end of tRNA(Asp/Asn). The protein is Aspartate--tRNA(Asp/Asn) ligase of Brachyspira hyodysenteriae (strain ATCC 49526 / WA1).